We begin with the raw amino-acid sequence, 161 residues long: Non-secretory ribonuclease (161 aa).

The signal sequence occupies residues 1-27 (MVPKLFTSQICLLLLLGLLAVEGSLHV). The C-linked (Man) tryptophan glycan is linked to W34. H42 (proton acceptor) is an active-site residue. A glycan (N-linked (GlcNAc...) asparagine) is linked at N44. Cystine bridges form between C50–C110, C64–C123, C82–C138, and C89–C98. 3'-nitrotyrosine is present on Y60. 65–69 (KNQNT) is a substrate binding site. 4 N-linked (GlcNAc...) asparagine glycosylation sites follow: N86, N92, N111, and N119. Catalysis depends on H156, which acts as the Proton donor.

Belongs to the pancreatic ribonuclease family. In terms of assembly, interacts with and forms a tight 1:1 complex with RNH1. Dimerization of two such complexes may occur.

It is found in the lysosome. It localises to the cytoplasmic granule. The catalysed reaction is an [RNA] containing cytidine + H2O = an [RNA]-3'-cytidine-3'-phosphate + a 5'-hydroxy-ribonucleotide-3'-[RNA].. It catalyses the reaction an [RNA] containing uridine + H2O = an [RNA]-3'-uridine-3'-phosphate + a 5'-hydroxy-ribonucleotide-3'-[RNA].. In terms of biological role, this is a non-secretory ribonuclease. It is a pyrimidine specific nuclease with a slight preference for U. Cytotoxin and helminthotoxin. Possesses a wide variety of biological activities. This chain is Non-secretory ribonuclease (RNASE2), found in Gorilla gorilla gorilla (Western lowland gorilla).